A 106-amino-acid polypeptide reads, in one-letter code: uncharacterized protein (106 aa).

The N-terminal stretch at 1–27 (MHHFVPSISLFMASVSFSVFFSHLATS) is a signal peptide. Residues 42–62 (TLFSMVPLINSSFNLSVFLFF) form a helical membrane-spanning segment.

Its subcellular location is the membrane. This is an uncharacterized protein from Saccharomyces cerevisiae (strain ATCC 204508 / S288c) (Baker's yeast).